The chain runs to 247 residues: Dynein axonemal assembly factor 19 (247 aa).

Positions 12 to 32 form a coiled coil; that stretch reads LEKELHSALQADRKYQRENDA.

It belongs to the DNAAF19/PR46b family. Homodimer. In terms of tissue distribution, expressed in all cells bearing motile cilia.

It is found in the cytoplasm. It localises to the cell projection. The protein resides in the cilium. Its subcellular location is the flagellum. Functionally, dynein-attachment factor required for cilia motility. The chain is Dynein axonemal assembly factor 19 (dnaaf19) from Danio rerio (Zebrafish).